The following is a 99-amino-acid chain: Small integral membrane protein 14 (99 aa).

At 1–49 (MAEGGFDPCECVCSHEHAMRRLINLLRQSQSYCTDTECLQELPGPSSDN) the chain is on the lumenal side. Residues 50–70 (GISITMILMAWMVIAVILFLL) traverse the membrane as a helical segment. The Cytoplasmic segment spans residues 71 to 99 (RPPNLRGSNLTGKPASPHNGQDPPAPPVD). The segment at 78–99 (SNLTGKPASPHNGQDPPAPPVD) is disordered.

The protein resides in the endoplasmic reticulum membrane. The chain is Small integral membrane protein 14 (SMIM14) from Bos taurus (Bovine).